The following is a 397-amino-acid chain: uncharacterized protein (397 aa).

[4Fe-4S] cluster contacts are provided by C47, C53, C56, and C131. 4 residues coordinate S-adenosyl-L-methionine: Q235, F262, E282, and D328. The Nucleophile role is filled by C354.

The protein belongs to the class I-like SAM-binding methyltransferase superfamily. RNA M5U methyltransferase family.

This is an uncharacterized protein from Zymomonas mobilis subsp. mobilis (strain ATCC 31821 / ZM4 / CP4).